A 348-amino-acid chain; its full sequence is Ketol-acid reductoisomerase (NADP(+)) (348 aa).

A KARI N-terminal Rossmann domain is found at 2 to 182; sequence AKTYYDHDAD…GCTRAGVLET (181 aa). NADP(+)-binding positions include 25–28, S51, S53, and 83–86; these read YGSQ and DTAQ. The active site involves H108. G134 is an NADP(+) binding site. The KARI C-terminal knotted domain occupies 183–328; the sequence is TFKEETETDL…EKLRAAMPFL (146 aa). Residues D191, E195, E227, and E231 each coordinate Mg(2+). S252 serves as a coordination point for substrate.

Belongs to the ketol-acid reductoisomerase family. The cofactor is Mg(2+).

It carries out the reaction (2R)-2,3-dihydroxy-3-methylbutanoate + NADP(+) = (2S)-2-acetolactate + NADPH + H(+). The enzyme catalyses (2R,3R)-2,3-dihydroxy-3-methylpentanoate + NADP(+) = (S)-2-ethyl-2-hydroxy-3-oxobutanoate + NADPH + H(+). It functions in the pathway amino-acid biosynthesis; L-isoleucine biosynthesis; L-isoleucine from 2-oxobutanoate: step 2/4. The protein operates within amino-acid biosynthesis; L-valine biosynthesis; L-valine from pyruvate: step 2/4. Functionally, involved in the biosynthesis of branched-chain amino acids (BCAA). Catalyzes an alkyl-migration followed by a ketol-acid reduction of (S)-2-acetolactate (S2AL) to yield (R)-2,3-dihydroxy-isovalerate. In the isomerase reaction, S2AL is rearranged via a Mg-dependent methyl migration to produce 3-hydroxy-3-methyl-2-ketobutyrate (HMKB). In the reductase reaction, this 2-ketoacid undergoes a metal-dependent reduction by NADPH to yield (R)-2,3-dihydroxy-isovalerate. In Acidobacterium capsulatum (strain ATCC 51196 / DSM 11244 / BCRC 80197 / JCM 7670 / NBRC 15755 / NCIMB 13165 / 161), this protein is Ketol-acid reductoisomerase (NADP(+)).